The sequence spans 320 residues: MLIDQFDRKINYLRISVTQRCNFRCLYCMPKIPFDYQPKENLLSFEELFLFVKATIDEGIEKIRITGGEPLLRKDLSIFIKMISDYKSDIDLAITTNGFLLKDFAKDLKNAGLKRLNISLDTLDHKKAKTLAQKDVLDSVLSGIDEALNLDLKVKLNTVALKNLNDDELISLLEFAKSKKAQIRFIEFMENTHAYGKLQGLKRDEIIQILSQKYQIQLIKKDEKAPVSIYKADDYEFGIIDPHSHEFCDSCNRIRLSAEGLLIPCLYFDEASSIKEAVRKGDIKAAVEILQEVLRNKPEKNKWSVVDNETSSRAFYQTGG.

A Radical SAM core domain is found at 5–225 (QFDRKINYLR…IQLIKKDEKA (221 aa)). Arg-14 contacts GTP. Cys-21 and Cys-25 together coordinate [4Fe-4S] cluster. Position 27 (Tyr-27) interacts with S-adenosyl-L-methionine. Cys-28 serves as a coordination point for [4Fe-4S] cluster. Position 64 (Arg-64) interacts with GTP. Residue Gly-68 coordinates S-adenosyl-L-methionine. Thr-95 serves as a coordination point for GTP. An S-adenosyl-L-methionine-binding site is contributed by Ser-119. Lys-155 provides a ligand contact to GTP. Met-189 provides a ligand contact to S-adenosyl-L-methionine. [4Fe-4S] cluster contacts are provided by Cys-248 and Cys-251. A GTP-binding site is contributed by 253 to 255 (RIR). Cys-265 is a [4Fe-4S] cluster binding site.

This sequence belongs to the radical SAM superfamily. MoaA family. In terms of assembly, monomer and homodimer. [4Fe-4S] cluster is required as a cofactor.

It catalyses the reaction GTP + AH2 + S-adenosyl-L-methionine = (8S)-3',8-cyclo-7,8-dihydroguanosine 5'-triphosphate + 5'-deoxyadenosine + L-methionine + A + H(+). It functions in the pathway cofactor biosynthesis; molybdopterin biosynthesis. Its function is as follows. Catalyzes the cyclization of GTP to (8S)-3',8-cyclo-7,8-dihydroguanosine 5'-triphosphate. This Campylobacter jejuni subsp. doylei (strain ATCC BAA-1458 / RM4099 / 269.97) protein is GTP 3',8-cyclase.